The following is a 55-amino-acid chain: Spermatid nuclear transition protein 1 (55 aa).

Positions 1–42 (MSTSRKLKTHGMRRGKNRAPHKGVKRGGSKRKYRKSVLKSRK) are enriched in basic residues. Residues 1 to 55 (MSTSRKLKTHGMRRGKNRAPHKGVKRGGSKRKYRKSVLKSRKRGDDASRNYRSHL) form a disordered region. A phosphoserine mark is found at S36 and S40.

Belongs to the nuclear transition protein 1 family. As to expression, testis-specific.

Its subcellular location is the nucleus. It localises to the chromosome. Plays a key role in the replacement of histones to protamine in the elongating spermatids of mammals. In condensing spermatids, loaded onto the nucleosomes, where it promotes the recruitment and processing of protamines, which are responsible for histone eviction. The histone H2AB1-H2BC1/TH2B dimer is required for loading of TNP1 onto chromatin. The sequence is that of Spermatid nuclear transition protein 1 from Mus musculus (Mouse).